The following is a 296-amino-acid chain: LysM and putative peptidoglycan-binding domain-containing protein 4 (296 aa).

The Extracellular portion of the chain corresponds to 1 to 217 (MRHKELLSKT…PMDGADCGIQ (217 aa)). The N-linked (GlcNAc...) asparagine glycan is linked to Asn30. One can recognise a LysM domain in the interval 74-118 (LQRELAQEDSLNKLALQYGCKVADIKKVNNFIREQDLYALKSIKS). Residues 218–238 (WWNAVFIMLLIGIVLPIFYLV) form a helical membrane-spanning segment. Over 239-296 (YFKIQASGETPNSLNTAAIPNGSMAMGTVPGQAPRLAVAVPTVPSADSQFSQTTQAGN) the chain is Cytoplasmic.

The protein localises to the membrane. The polypeptide is LysM and putative peptidoglycan-binding domain-containing protein 4 (LYSMD4) (Pongo abelii (Sumatran orangutan)).